A 345-amino-acid chain; its full sequence is Holliday junction branch migration complex subunit RuvB (345 aa).

Residues 4-185 are large ATPase domain (RuvB-L); that stretch reads LDNRFVTPLS…FGVLCPMEFY (182 aa). ATP-binding positions include Leu24, Arg25, Gly66, Lys69, Thr70, Thr71, 132–134, Arg175, Tyr185, and Arg222; that span reads EDY. Residue Thr70 participates in Mg(2+) binding. Residues 186 to 256 are small ATPAse domain (RuvB-S); the sequence is NEEELKDIIV…MTNKALNLLE (71 aa). Residues 259-345 are head domain (RuvB-H); it reads KEGFDSIDTK…ENINQYKFKI (87 aa). Arg314 and Arg319 together coordinate DNA.

Belongs to the RuvB family. Homohexamer. Forms an RuvA(8)-RuvB(12)-Holliday junction (HJ) complex. HJ DNA is sandwiched between 2 RuvA tetramers; dsDNA enters through RuvA and exits via RuvB. An RuvB hexamer assembles on each DNA strand where it exits the tetramer. Each RuvB hexamer is contacted by two RuvA subunits (via domain III) on 2 adjacent RuvB subunits; this complex drives branch migration. In the full resolvosome a probable DNA-RuvA(4)-RuvB(12)-RuvC(2) complex forms which resolves the HJ.

It is found in the cytoplasm. The enzyme catalyses ATP + H2O = ADP + phosphate + H(+). Its function is as follows. The RuvA-RuvB-RuvC complex processes Holliday junction (HJ) DNA during genetic recombination and DNA repair, while the RuvA-RuvB complex plays an important role in the rescue of blocked DNA replication forks via replication fork reversal (RFR). RuvA specifically binds to HJ cruciform DNA, conferring on it an open structure. The RuvB hexamer acts as an ATP-dependent pump, pulling dsDNA into and through the RuvAB complex. RuvB forms 2 homohexamers on either side of HJ DNA bound by 1 or 2 RuvA tetramers; 4 subunits per hexamer contact DNA at a time. Coordinated motions by a converter formed by DNA-disengaged RuvB subunits stimulates ATP hydrolysis and nucleotide exchange. Immobilization of the converter enables RuvB to convert the ATP-contained energy into a lever motion, pulling 2 nucleotides of DNA out of the RuvA tetramer per ATP hydrolyzed, thus driving DNA branch migration. The RuvB motors rotate together with the DNA substrate, which together with the progressing nucleotide cycle form the mechanistic basis for DNA recombination by continuous HJ branch migration. Branch migration allows RuvC to scan DNA until it finds its consensus sequence, where it cleaves and resolves cruciform DNA. This chain is Holliday junction branch migration complex subunit RuvB, found in Clostridium tetani (strain Massachusetts / E88).